Consider the following 420-residue polypeptide: Histidine--tRNA ligase (420 aa).

This sequence belongs to the class-II aminoacyl-tRNA synthetase family. Homodimer.

The protein resides in the cytoplasm. The enzyme catalyses tRNA(His) + L-histidine + ATP = L-histidyl-tRNA(His) + AMP + diphosphate + H(+). The chain is Histidine--tRNA ligase from Mycobacterium marinum (strain ATCC BAA-535 / M).